A 122-amino-acid polypeptide reads, in one-letter code: Large ribosomal subunit protein uL14 (122 aa).

Belongs to the universal ribosomal protein uL14 family. In terms of assembly, part of the 50S ribosomal subunit. Forms a cluster with proteins L3 and L19. In the 70S ribosome, L14 and L19 interact and together make contacts with the 16S rRNA in bridges B5 and B8.

Its function is as follows. Binds to 23S rRNA. Forms part of two intersubunit bridges in the 70S ribosome. This chain is Large ribosomal subunit protein uL14, found in Solidesulfovibrio magneticus (strain ATCC 700980 / DSM 13731 / RS-1) (Desulfovibrio magneticus).